Here is a 336-residue protein sequence, read N- to C-terminus: Holliday junction branch migration complex subunit RuvB (336 aa).

The large ATPase domain (RuvB-L) stretch occupies residues 1–183; it reads MATERLVAGN…FGINSRLEFY (183 aa). ATP-binding positions include Leu-22, Arg-23, Gly-64, Lys-67, Thr-68, Thr-69, 130 to 132, Arg-173, Tyr-183, and Arg-220; that span reads EDF. A Mg(2+)-binding site is contributed by Thr-68. A small ATPAse domain (RuvB-S) region spans residues 184–254; that stretch reads QVAELEEIIR…VAREALELLQ (71 aa). The segment at 257-336 is head domain (RuvB-H); it reads AAGLDSSDRR…LGIKPEDRLF (80 aa). Residues Arg-312 and Arg-317 each contribute to the DNA site.

This sequence belongs to the RuvB family. Homohexamer. Forms an RuvA(8)-RuvB(12)-Holliday junction (HJ) complex. HJ DNA is sandwiched between 2 RuvA tetramers; dsDNA enters through RuvA and exits via RuvB. An RuvB hexamer assembles on each DNA strand where it exits the tetramer. Each RuvB hexamer is contacted by two RuvA subunits (via domain III) on 2 adjacent RuvB subunits; this complex drives branch migration. In the full resolvosome a probable DNA-RuvA(4)-RuvB(12)-RuvC(2) complex forms which resolves the HJ.

It is found in the cytoplasm. It carries out the reaction ATP + H2O = ADP + phosphate + H(+). Functionally, the RuvA-RuvB-RuvC complex processes Holliday junction (HJ) DNA during genetic recombination and DNA repair, while the RuvA-RuvB complex plays an important role in the rescue of blocked DNA replication forks via replication fork reversal (RFR). RuvA specifically binds to HJ cruciform DNA, conferring on it an open structure. The RuvB hexamer acts as an ATP-dependent pump, pulling dsDNA into and through the RuvAB complex. RuvB forms 2 homohexamers on either side of HJ DNA bound by 1 or 2 RuvA tetramers; 4 subunits per hexamer contact DNA at a time. Coordinated motions by a converter formed by DNA-disengaged RuvB subunits stimulates ATP hydrolysis and nucleotide exchange. Immobilization of the converter enables RuvB to convert the ATP-contained energy into a lever motion, pulling 2 nucleotides of DNA out of the RuvA tetramer per ATP hydrolyzed, thus driving DNA branch migration. The RuvB motors rotate together with the DNA substrate, which together with the progressing nucleotide cycle form the mechanistic basis for DNA recombination by continuous HJ branch migration. Branch migration allows RuvC to scan DNA until it finds its consensus sequence, where it cleaves and resolves cruciform DNA. The protein is Holliday junction branch migration complex subunit RuvB of Moorella thermoacetica (strain ATCC 39073 / JCM 9320).